Reading from the N-terminus, the 230-residue chain is ATP synthase subunit a (230 aa).

5 helical membrane passes run 17–37 (LPIT…FIMA), 78–98 (IFPF…IGVI), 107–127 (DLSV…WFGI), 165–187 (LFGN…GFLV), and 198–218 (EAII…AGGI).

This sequence belongs to the ATPase A chain family. In terms of assembly, F-type ATPases have 2 components, CF(1) - the catalytic core - and CF(0) - the membrane proton channel. CF(1) has five subunits: alpha(3), beta(3), gamma(1), delta(1), epsilon(1). CF(0) has three main subunits: a(1), b(2) and c(9-12). The alpha and beta chains form an alternating ring which encloses part of the gamma chain. CF(1) is attached to CF(0) by a central stalk formed by the gamma and epsilon chains, while a peripheral stalk is formed by the delta and b chains.

It localises to the cell inner membrane. Its function is as follows. Key component of the proton channel; it plays a direct role in the translocation of protons across the membrane. This is ATP synthase subunit a from Legionella pneumophila (strain Paris).